Reading from the N-terminus, the 353-residue chain is 4-hydroxy-3-methylbut-2-en-1-yl diphosphate synthase (flavodoxin) (353 aa).

[4Fe-4S] cluster contacts are provided by Cys-265, Cys-268, Cys-300, and Glu-307.

It belongs to the IspG family. [4Fe-4S] cluster is required as a cofactor.

It carries out the reaction (2E)-4-hydroxy-3-methylbut-2-enyl diphosphate + oxidized [flavodoxin] + H2O + 2 H(+) = 2-C-methyl-D-erythritol 2,4-cyclic diphosphate + reduced [flavodoxin]. It functions in the pathway isoprenoid biosynthesis; isopentenyl diphosphate biosynthesis via DXP pathway; isopentenyl diphosphate from 1-deoxy-D-xylulose 5-phosphate: step 5/6. Converts 2C-methyl-D-erythritol 2,4-cyclodiphosphate (ME-2,4cPP) into 1-hydroxy-2-methyl-2-(E)-butenyl 4-diphosphate. In Sulfurihydrogenibium sp. (strain YO3AOP1), this protein is 4-hydroxy-3-methylbut-2-en-1-yl diphosphate synthase (flavodoxin).